We begin with the raw amino-acid sequence, 434 residues long: APETALA2-like protein 2 (434 aa).

The disordered stretch occupies residues 1–116 (MLLDLNVESP…KTRRGPRSRS (116 aa)). The span at 12 to 23 (RSGTSSSSVLNS) shows a compositional bias: low complexity. Positions 25-38 (DAGGGGGGGGGGGL) are enriched in gly residues. Pro residues predominate over residues 72-87 (LPPPPPAAPSPAPAWQ). Residues 104-113 (VAKKTRRGPR) show a composition bias toward basic residues. The Nuclear localization signal motif lies at 106 to 115 (KKTRRGPRSR). 2 consecutive DNA-binding regions (AP2/ERF) follow at residues 118-174 (QYRG…INFN) and 210-267 (KFRG…TNFE). The EAR motif lies at 291–295 (LDLRI).

Belongs to the AP2/ERF transcription factor family. AP2 subfamily. In terms of assembly, may form homodimer. Interacts with TPR2/ASP1.

Its subcellular location is the nucleus. In terms of biological role, probable transcription factor. Involved in spikelet transition. Together with SNB, controls synergistically inflorescence architecture and floral meristem establishment via the regulation of spatio-temporal expression of B- and E-function floral organ identity genes in the lodicules and of spikelet meristem genes. Prevents lemma and palea elongation as well as grain growth. The sequence is that of APETALA2-like protein 2 from Oryza sativa subsp. indica (Rice).